The chain runs to 288 residues: Large ribosomal subunit protein uL2 (288 aa).

Disordered stretches follow at residues 1 to 46 and 226 to 288; these read MAIH…RNVY and MVMN…RGKK. Positions 235-248 are enriched in gly residues; it reads NGGGQGKSKGGGGR. Basic residues predominate over residues 279 to 288; sequence HNGRKPRGKK.

This sequence belongs to the universal ribosomal protein uL2 family. As to quaternary structure, part of the 50S ribosomal subunit. Forms a bridge to the 30S subunit in the 70S ribosome.

Its function is as follows. One of the primary rRNA binding proteins. Required for association of the 30S and 50S subunits to form the 70S ribosome, for tRNA binding and peptide bond formation. It has been suggested to have peptidyltransferase activity; this is somewhat controversial. Makes several contacts with the 16S rRNA in the 70S ribosome. This is Large ribosomal subunit protein uL2 from Opitutus terrae (strain DSM 11246 / JCM 15787 / PB90-1).